A 352-amino-acid polypeptide reads, in one-letter code: Fc receptor-like A (352 aa).

The signal sequence occupies residues 1–30; the sequence is MKLSCTLTQWALYVCPAVLLATQMLLAASS. The segment at 46–65 is disordered; that stretch reads CQAAAEEDEGDEDDGDMTQS. The segment covering 50-61 has biased composition (acidic residues); the sequence is AEEDEGDEDDGD. 2 consecutive Ig-like C2-type domains span residues 80–169 and 182–260; these read PFHL…EAAS and PVLK…RQIS. Cystine bridges form between C109–C153 and C202–C250. Residues 275–310 are disordered; that stretch reads KPTASETPPTEALGPLPPPPASSAEQPRFSSPDPHL.

As to quaternary structure, monomer or homodimer; disulfide-linked. As to expression, highly expressed in spleen. Expressed in immature B-cell and B-cell lines.

The protein localises to the cytoplasm. May be implicated in B-cell differentiation and lymphomagenesis. This chain is Fc receptor-like A (Fcrla), found in Mus musculus (Mouse).